We begin with the raw amino-acid sequence, 304 residues long: Non-specific ribonucleoside hydrolase RihC (304 aa).

Residue His233 is part of the active site.

This sequence belongs to the IUNH family. RihC subfamily.

In terms of biological role, hydrolyzes both purine and pyrimidine ribonucleosides with a broad-substrate specificity. The sequence is that of Non-specific ribonucleoside hydrolase RihC from Shigella boydii serotype 4 (strain Sb227).